We begin with the raw amino-acid sequence, 89 residues long: Phosphocarrier protein HPr (89 aa).

The region spanning 1–89 (MERTVTVVPE…DILSTPEAKQ (89 aa)) is the HPr domain. The active-site Pros-phosphohistidine intermediate is histidine 14. At serine 47 the chain carries Phosphoserine; by HPrK/P.

The protein belongs to the HPr family.

It is found in the cytoplasm. With respect to regulation, phosphorylation on Ser-47 inhibits the phosphoryl transfer from enzyme I to HPr. In terms of biological role, general (non sugar-specific) component of the phosphoenolpyruvate-dependent sugar phosphotransferase system (sugar PTS). This major carbohydrate active-transport system catalyzes the phosphorylation of incoming sugar substrates concomitantly with their translocation across the cell membrane. The phosphoryl group from phosphoenolpyruvate (PEP) is transferred to the phosphoryl carrier protein HPr by enzyme I. Phospho-HPr then transfers it to the PTS EIIA domain. Is involved in fructose transport. This Haloferax volcanii (strain ATCC 29605 / DSM 3757 / JCM 8879 / NBRC 14742 / NCIMB 2012 / VKM B-1768 / DS2) (Halobacterium volcanii) protein is Phosphocarrier protein HPr (ptsH1).